We begin with the raw amino-acid sequence, 298 residues long: MNHIQEAFLNTLKVERNFSEHTLKSYQDDLIQFNQFLEQEHLQLNTFEYRDARNYLSYLYSNHLKRTSVSRKISTLRTFYEYWMTLDENIINPFVQLVHPKKEKYLPQFFYEEEMEALFKTVEEDTSKSLRDRVILELLYATGIRVSELVNIKKQDIDFYANGVTVLGKGSKERFVPFGAYCRQSIENYLEHFKPIQSCNHDFLIVNMKGEAITERGVRYVLNDIVKRTAGVSEIHPHKLRHTFATHLLNQGADLRTVQSLLGHVNLSTTGKYTHVSNQQLRKVYLNAHPRAKKENET.

The region spanning 1-84 (MNHIQEAFLN…TLRTFYEYWM (84 aa)) is the Core-binding (CB) domain. The Tyr recombinase domain maps to 105–286 (YLPQFFYEEE…SNQQLRKVYL (182 aa)). Residues Arg-145, Lys-169, His-238, Arg-241, and His-264 contribute to the active site. Tyr-273 acts as the O-(3'-phospho-DNA)-tyrosine intermediate in catalysis.

This sequence belongs to the 'phage' integrase family. XerC subfamily. In terms of assembly, forms a cyclic heterotetrameric complex composed of two molecules of XerC and two molecules of XerD.

The protein resides in the cytoplasm. Its function is as follows. Site-specific tyrosine recombinase, which acts by catalyzing the cutting and rejoining of the recombining DNA molecules. The XerC-XerD complex is essential to convert dimers of the bacterial chromosome into monomers to permit their segregation at cell division. It also contributes to the segregational stability of plasmids. The protein is Tyrosine recombinase XerC of Staphylococcus aureus (strain MRSA252).